The chain runs to 179 residues: Large ribosomal subunit protein uL5 (179 aa).

The protein belongs to the universal ribosomal protein uL5 family. As to quaternary structure, part of the 50S ribosomal subunit; part of the 5S rRNA/L5/L18/L25 subcomplex. Contacts the 5S rRNA and the P site tRNA. Forms a bridge to the 30S subunit in the 70S ribosome.

In terms of biological role, this is one of the proteins that bind and probably mediate the attachment of the 5S RNA into the large ribosomal subunit, where it forms part of the central protuberance. In the 70S ribosome it contacts protein S13 of the 30S subunit (bridge B1b), connecting the 2 subunits; this bridge is implicated in subunit movement. Contacts the P site tRNA; the 5S rRNA and some of its associated proteins might help stabilize positioning of ribosome-bound tRNAs. This Shouchella clausii (strain KSM-K16) (Alkalihalobacillus clausii) protein is Large ribosomal subunit protein uL5.